Consider the following 305-residue polypeptide: Ribosomal RNA small subunit methyltransferase H (305 aa).

S-adenosyl-L-methionine-binding positions include 47-49 (GGH), aspartate 66, phenylalanine 93, aspartate 108, and glutamine 115. Residues 280–305 (ASAEEQERNPRSRSAKLRIARKRSES) form a disordered region. Residues 290-305 (RSRSAKLRIARKRSES) are compositionally biased toward basic residues.

The protein belongs to the methyltransferase superfamily. RsmH family.

Its subcellular location is the cytoplasm. It catalyses the reaction cytidine(1402) in 16S rRNA + S-adenosyl-L-methionine = N(4)-methylcytidine(1402) in 16S rRNA + S-adenosyl-L-homocysteine + H(+). Its function is as follows. Specifically methylates the N4 position of cytidine in position 1402 (C1402) of 16S rRNA. The polypeptide is Ribosomal RNA small subunit methyltransferase H (Synechococcus sp. (strain WH7803)).